The following is a 237-amino-acid chain: Phosphoribosylaminoimidazole-succinocarboxamide synthase (237 aa).

This sequence belongs to the SAICAR synthetase family.

The catalysed reaction is 5-amino-1-(5-phospho-D-ribosyl)imidazole-4-carboxylate + L-aspartate + ATP = (2S)-2-[5-amino-1-(5-phospho-beta-D-ribosyl)imidazole-4-carboxamido]succinate + ADP + phosphate + 2 H(+). It functions in the pathway purine metabolism; IMP biosynthesis via de novo pathway; 5-amino-1-(5-phospho-D-ribosyl)imidazole-4-carboxamide from 5-amino-1-(5-phospho-D-ribosyl)imidazole-4-carboxylate: step 1/2. This Pseudomonas fluorescens (strain Pf0-1) protein is Phosphoribosylaminoimidazole-succinocarboxamide synthase.